Reading from the N-terminus, the 332-residue chain is Casein kinase I isoform 2 (332 aa).

A Protein kinase domain is found at 11–282; it reads FRIGQKIGSG…YLKRLFRELF (272 aa). Residues 17–25 and Lys40 contribute to the ATP site; that span reads IGSGSFGEI. The active-site Proton acceptor is the Asp133. The segment at 306 to 332 is disordered; that stretch reads EGRADQQQQQQQQQQRRGSEKEDEHPV. A compositionally biased stretch (low complexity) spans 311 to 320; sequence QQQQQQQQQQ. Positions 322–332 are enriched in basic and acidic residues; it reads RGSEKEDEHPV.

It belongs to the protein kinase superfamily. Ser/Thr protein kinase family. Requires Mg(2+) as cofactor.

It carries out the reaction L-seryl-[protein] + ATP = O-phospho-L-seryl-[protein] + ADP + H(+). It catalyses the reaction L-threonyl-[protein] + ATP = O-phospho-L-threonyl-[protein] + ADP + H(+). In terms of biological role, serine/threonine protein kinase. May phosphorylate ZC3H11 during unstressed conditions, leading to proteasome-dependent degradation of ZC3H11. The chain is Casein kinase I isoform 2 from Trypanosoma brucei brucei.